A 747-amino-acid chain; its full sequence is DNA ligase (747 aa).

NAD(+) contacts are provided by residues 33–37 (DEEYD), 83–84 (SL), and Glu113. Lys115 serves as the catalytic N6-AMP-lysine intermediate. Arg136, Glu174, Lys299, and Lys323 together coordinate NAD(+). Zn(2+) contacts are provided by Cys417, Cys420, Cys436, and Cys442. One can recognise a BRCT domain in the interval 659-747 (TGGGVLSGLT…GPGALPEVAE (89 aa)).

Belongs to the NAD-dependent DNA ligase family. LigA subfamily. Mg(2+) serves as cofactor. The cofactor is Mn(2+).

The enzyme catalyses NAD(+) + (deoxyribonucleotide)n-3'-hydroxyl + 5'-phospho-(deoxyribonucleotide)m = (deoxyribonucleotide)n+m + AMP + beta-nicotinamide D-nucleotide.. Its function is as follows. DNA ligase that catalyzes the formation of phosphodiester linkages between 5'-phosphoryl and 3'-hydroxyl groups in double-stranded DNA using NAD as a coenzyme and as the energy source for the reaction. It is essential for DNA replication and repair of damaged DNA. This chain is DNA ligase, found in Leifsonia xyli subsp. xyli (strain CTCB07).